Here is a 343-residue protein sequence, read N- to C-terminus: Mesaconyl-CoA hydratase (343 aa).

In terms of domain architecture, MaoC-like spans 47–116 (SDEFARACGL…STVIGLKENS (70 aa)). Residues 60–63 (PVDE), 83–86 (VANL), and 94–96 (LKP) contribute to the substrate site.

The enzyme catalyses (2R,3S)-beta-methylmalyl-CoA = 2-methylfumaryl-CoA + H2O. Its function is as follows. Involved in the ethylmalonyl-CoA pathway for acetate assimilation. Catalyzes the reversible hydration of mesaconyl-CoA (2-methylfumaryl-CoA) to yield beta-methylmalyl-CoA ((2R,3S)-beta-methylmalyl-CoA). This is Mesaconyl-CoA hydratase (mch) from Cereibacter sphaeroides (strain ATCC 17023 / DSM 158 / JCM 6121 / CCUG 31486 / LMG 2827 / NBRC 12203 / NCIMB 8253 / ATH 2.4.1.) (Rhodobacter sphaeroides).